We begin with the raw amino-acid sequence, 132 residues long: DNA-binding protein inhibitor ID-2 (132 aa).

The 53-residue stretch at 23–75 (ARSKTPVDDPMSLLYNMNDCYSKLKELVPSIPQNKKVSKMEILQHVIDYILDL) folds into the bHLH domain. A Nuclear export signal motif is present at residues 105–114 (LNTDISILSL).

As to quaternary structure, heterodimer with other HLH proteins.

Its subcellular location is the cytoplasm. It localises to the nucleus. Transcriptional regulator (lacking a basic DNA binding domain) which negatively regulates the basic helix-loop-helix (bHLH) transcription factors by forming heterodimers and inhibiting their DNA binding and transcriptional activity. Inhibits the activity of both neurogenic (neurod1/neuroD) and myogenic (myod1/myoD) bHLH factors. May play a role in the regulation of the circadian clock. This is DNA-binding protein inhibitor ID-2 from Xenopus tropicalis (Western clawed frog).